Here is a 138-residue protein sequence, read N- to C-terminus: Basic phospholipase A2 homolog Tpu-K49a (138 aa).

A signal peptide spans 1 to 16; the sequence is MRTLWIMAVLLVGVEG. Cystine bridges form between C42-C131, C44-C60, C59-C111, C65-C138, C66-C104, and C91-C102. An important for membrane-damaging activities in eukaryotes and bacteria; heparin-binding region spans residues 121 to 133; that stretch reads KKERINTKIFCKK.

As to quaternary structure, monomer. In terms of tissue distribution, expressed by the venom gland.

It is found in the secreted. In terms of biological role, snake venom phospholipase A2 homolog that lacks catalytic activity. Induces local edema a few hours after injection in the hind foot. Is myotoxic. A model of myotoxic mechanism has been proposed: an apo Lys49-PLA2 is activated by the entrance of a hydrophobic molecule (e.g. fatty acid) at the hydrophobic channel of the protein leading to a reorientation of a monomer. This reorientation causes a transition between 'inactive' to 'active' states, causing alignment of C-terminal and membrane-docking sites (MDoS) side-by-side and putting the membrane-disruption sites (MDiS) in the same plane, exposed to solvent and in a symmetric position for both monomers. The MDoS region stabilizes the toxin on membrane by the interaction of charged residues with phospholipid head groups. Subsequently, the MDiS region destabilizes the membrane with penetration of hydrophobic residues. This insertion causes a disorganization of the membrane, allowing an uncontrolled influx of ions (i.e. calcium and sodium), and eventually triggering irreversible intracellular alterations and cell death. This is Basic phospholipase A2 homolog Tpu-K49a from Craspedocephalus puniceus (Flat-nosed pitviper).